Consider the following 466-residue polypeptide: cGMP-specific 3',5'-cGMP phosphodiesterase 3 (466 aa).

Residues 1–120 show a composition bias toward low complexity; that stretch reads MAPQQNIMKQ…NSNNNNSNNN (120 aa). The tract at residues 1–150 is disordered; sequence MAPQQNIMKQ…NNNKIRGYND (150 aa). Residues 123–134 are compositionally biased toward acidic residues; sequence DDEEEEGDDEDN. A compositionally biased stretch (low complexity) spans 135 to 150; sequence NNNNNSNNNKIRGYND. One can recognise a PDEase domain in the interval 137 to 458; the sequence is NNNSNNNKIR…EIWSNNGSSS (322 aa). His213 (proton donor) is an active-site residue. Residues His217, His253, Asp254, and Asp364 each contribute to the a divalent metal cation site.

The protein belongs to the cyclic nucleotide phosphodiesterase family. The cofactor is a divalent metal cation.

Its subcellular location is the cytoplasm. It is found in the cytosol. It carries out the reaction 3',5'-cyclic GMP + H2O = GMP + H(+). With respect to regulation, inhibited by 3-isobutyl-1-methylxanthine (IBMX). In terms of biological role, phosphodiesterase specific for cGMP, which is not activated by cGMP. Involved in the degradation of intracellular cGMP. The sequence is that of cGMP-specific 3',5'-cGMP phosphodiesterase 3 (pde3) from Dictyostelium discoideum (Social amoeba).